The following is a 75-amino-acid chain: Putative UPF0377 protein YAL067W-A (75 aa).

This sequence belongs to the UPF0377 family.

The polypeptide is Putative UPF0377 protein YAL067W-A (Saccharomyces cerevisiae (strain ATCC 204508 / S288c) (Baker's yeast)).